A 768-amino-acid polypeptide reads, in one-letter code: Vitamin B12-dependent ribonucleoside-diphosphate reductase (768 aa).

The ATP-cone domain occupies Lys-3–Arg-97. Residues Ser-234, Ala-249–Cys-250, Gly-278, Asn-432–Glu-436, and Pro-579–Ile-583 contribute to the substrate site. A disulfide bridge links Cys-250 with Cys-445. Catalysis depends on Asn-432, which acts as the Proton acceptor. The active-site Cysteine radical intermediate is Cys-434. Residue Glu-436 is the Proton acceptor of the active site.

The protein belongs to the ribonucleoside diphosphate reductase class-2 family. Monomer. It depends on adenosylcob(III)alamin as a cofactor.

The catalysed reaction is a 2'-deoxyribonucleoside 5'-diphosphate + [thioredoxin]-disulfide + H2O = a ribonucleoside 5'-diphosphate + [thioredoxin]-dithiol. Provides the precursors necessary for DNA synthesis. Catalyzes the biosynthesis of deoxyribonucleotides from the corresponding ribonucleotides. This chain is Vitamin B12-dependent ribonucleoside-diphosphate reductase, found in Thermoplasma acidophilum (strain ATCC 25905 / DSM 1728 / JCM 9062 / NBRC 15155 / AMRC-C165).